Reading from the N-terminus, the 297-residue chain is Polyketide transferase ATR5 (297 aa).

The abhydrolase domain stretch occupies residues 49 to 272 (DVAVWFQKRG…FVLAENKGHM (224 aa)).

Belongs to the polyketide transferase af380 family.

Its pathway is mycotoxin biosynthesis. In terms of biological role, polyketide transferase; part of the core atranone cluster (CAC) which products are predicted to catalyze most or all steps of atranone synthesis, starting from geranylgeranyl pyrophosphate (GGPP). The initial cyclization of GGPP to dolabellane is probably performed by the terpene cyclase ATR13. The Baeyer-Villiger oxidation near the end of the atranone synthesis, which converts atranones D and E to atranones F and G is predicted to be catalyzed by the monooxygenase ATR8. Of the CAC's other predicted gene products, the reducing PKS ATR6 might synthesize a polyketide chain. This polyketide is probably transferred onto the atranone backbone by the polyketide transferase ATR5. Other predicted CAC products include 4 oxygenases (ATR2, ATR3, ATR4, and ATR14), 3 short-chain reductases (ATR7, ATR9, and ATR10), and a methyltransferase (ATR12). These may all be involved in the various steps of atranone biosynthesis, although their specific roles must await experimental determination. The polypeptide is Polyketide transferase ATR5 (Stachybotrys chlorohalonatus (strain IBT 40285)).